Here is a 139-residue protein sequence, read N- to C-terminus: Large ribosomal subunit protein uL16 (139 aa).

Belongs to the universal ribosomal protein uL16 family. As to quaternary structure, part of the 50S ribosomal subunit.

Binds 23S rRNA and is also seen to make contacts with the A and possibly P site tRNAs. The polypeptide is Large ribosomal subunit protein uL16 (Treponema denticola (strain ATCC 35405 / DSM 14222 / CIP 103919 / JCM 8153 / KCTC 15104)).